The primary structure comprises 39 residues: Photosystem II reaction center protein L (39 aa).

A helical membrane pass occupies residues Ser18–Phe38.

Belongs to the PsbL family. In terms of assembly, PSII is composed of 1 copy each of membrane proteins PsbA, PsbB, PsbC, PsbD, PsbE, PsbF, PsbH, PsbI, PsbJ, PsbK, PsbL, PsbM, PsbT, PsbX, PsbY, Psb30/Ycf12, peripheral proteins PsbO, CyanoQ (PsbQ), PsbU, PsbV and a large number of cofactors. It forms dimeric complexes.

The protein localises to the cellular thylakoid membrane. In terms of biological role, one of the components of the core complex of photosystem II (PSII). PSII is a light-driven water:plastoquinone oxidoreductase that uses light energy to abstract electrons from H(2)O, generating O(2) and a proton gradient subsequently used for ATP formation. It consists of a core antenna complex that captures photons, and an electron transfer chain that converts photonic excitation into a charge separation. This subunit is found at the monomer-monomer interface and is required for correct PSII assembly and/or dimerization. The chain is Photosystem II reaction center protein L from Prochlorococcus marinus (strain MIT 9515).